A 268-amino-acid chain; its full sequence is Malonyl-[acyl-carrier protein] O-methyltransferase 1 (268 aa).

This sequence belongs to the methyltransferase superfamily.

The enzyme catalyses malonyl-[ACP] + S-adenosyl-L-methionine = malonyl-[ACP] methyl ester + S-adenosyl-L-homocysteine. It functions in the pathway cofactor biosynthesis; biotin biosynthesis. Functionally, converts the free carboxyl group of a malonyl-thioester to its methyl ester by transfer of a methyl group from S-adenosyl-L-methionine (SAM). It allows to synthesize pimeloyl-ACP via the fatty acid synthetic pathway. The polypeptide is Malonyl-[acyl-carrier protein] O-methyltransferase 1 (Ilyobacter polytropus (strain ATCC 51220 / DSM 2926 / LMG 16218 / CuHBu1)).